A 261-amino-acid chain; its full sequence is uncharacterized protein (261 aa).

This is an uncharacterized protein from Mycobacterium tuberculosis (strain CDC 1551 / Oshkosh).